The primary structure comprises 125 residues: Small ribosomal subunit protein uS12c (125 aa).

Residues 1–23 form a disordered region; sequence MPTLEHLTRSPRKKIKRKTKSPA. A compositionally biased stretch (basic residues) spans 9–20; it reads RSPRKKIKRKTK.

The protein belongs to the universal ribosomal protein uS12 family. In terms of assembly, part of the 30S ribosomal subunit.

Its subcellular location is the plastid. It is found in the chloroplast. Its function is as follows. With S4 and S5 plays an important role in translational accuracy. Located at the interface of the 30S and 50S subunits. The sequence is that of Small ribosomal subunit protein uS12c (rps12) from Euglena gracilis.